Here is a 292-residue protein sequence, read N- to C-terminus: MSHLSQQRIYSGENPFACKVCGKVFSHKSNLTEHEHFHTREKPFECNECGKAFSQKQYVIKHQNTHTGEKLFECNECGKSFSQKENLLTHQKIHTGEKPFECKDCGKAFIQKSNLIRHQRTHTGEKPFVCKECGKTFSGKSNLTEHEKIHIGEKPFKCSECGTAFGQKKYLIKHQNIHTGEKPYECNECGKAFSQRTSLIVHVRIHSGDKPYECNVCGKAFSQSSSLTVHVRSHTGEKPYGCNECGKAFSQFSTLALHLRIHTGKKPYQCSECGKAFSQKSHHIRHQKIHTH.

10 C2H2-type zinc fingers span residues 16 to 38 (FACK…EHFH), 44 to 66 (FECN…QNTH), 72 to 94 (FECN…QKIH), 100 to 122 (FECK…QRTH), 128 to 150 (FVCK…EKIH), 156 to 178 (FKCS…QNIH), 184 to 206 (YECN…VRIH), 212 to 234 (YECN…VRSH), 240 to 262 (YGCN…LRIH), and 268 to 290 (YQCS…QKIH). Residues Lys28, Lys51, and Lys56 each participate in a glycyl lysine isopeptide (Lys-Gly) (interchain with G-Cter in SUMO2) cross-link. Residues Lys157 and Lys169 each participate in a glycyl lysine isopeptide (Lys-Gly) (interchain with G-Cter in SUMO) cross-link. Lys173 is covalently cross-linked (Glycyl lysine isopeptide (Lys-Gly) (interchain with G-Cter in SUMO2)). Residues 212–292 (YECNVCGKAF…HIRHQKIHTH (81 aa)) form an interaction with TERF2IP region.

Belongs to the krueppel C2H2-type zinc-finger protein family. In terms of assembly, binds DNA. Interacts with SUMO conjugating enzyme UBC9/UBE2I. Interacts with the telomeric protein TERF2IP. Sumoylated. In terms of tissue distribution, liver, skeletal and heart muscle, mammary cells. Very low levels in brain, lung, placenta and kidney. Strongly overexpressed in many pancreas and colorectal cancers. Increased gene copy numbers are detected in 3 of 12 tumor cell lines and 2 of 12 primary pancreatic carcinomas. Overexpressed in 80% of colorectal cancers.

It is found in the nucleus. The protein is Zinc finger protein OZF (ZNF146) of Homo sapiens (Human).